Here is a 61-residue protein sequence, read N- to C-terminus: Sperm protamine P1 (61 aa).

Residues 1–61 form a disordered region; the sequence is MARYRHSRSR…RYSRRRRRRY (61 aa).

This sequence belongs to the protamine P1 family. In terms of tissue distribution, testis.

It is found in the nucleus. The protein localises to the chromosome. Functionally, protamines substitute for histones in the chromatin of sperm during the haploid phase of spermatogenesis. They compact sperm DNA into a highly condensed, stable and inactive complex. This chain is Sperm protamine P1 (PRM1), found in Onychogalea fraenata (Bridled nail-tailed wallaby).